A 138-amino-acid polypeptide reads, in one-letter code: Flagellar basal body rod protein FlgB (138 aa).

This sequence belongs to the flagella basal body rod proteins family. The basal body constitutes a major portion of the flagellar organelle and consists of a number of rings mounted on a central rod. In Gram-negative bacteria, at least four rings, L, P, S and M are present, whereas Gram-positive bacteria lack the L and P rings. The rod consists of about 26 subunits of FlgG in the distal portion, and FlgB, FlgC and FlgF build up the proximal portion of the rod with about 6 subunits each. Rod assembly occurs by export via the flagellum-specific pathway of its constituent proteins and by their incorporation into the rod structure in the probable order of FlgB, FlgC, FlgF and FlgG. Another protein, FliE, also assembles onto the stable rod structure.

It localises to the bacterial flagellum basal body. In terms of biological role, structural component of flagellum, the bacterial motility apparatus. Part of the rod structure of flagellar basal body. The sequence is that of Flagellar basal body rod protein FlgB (flgB) from Escherichia coli (strain K12).